The following is a 451-amino-acid chain: D-aminoacyl-tRNA deacylase (451 aa).

Positions 410-437 (RTADIPEGPKFGKLASGESVEIDGEEID) are disordered.

The protein belongs to the DtdA deacylase family. As to quaternary structure, monomer. Zn(2+) serves as cofactor.

It catalyses the reaction a D-aminoacyl-tRNA + H2O = a tRNA + a D-alpha-amino acid + H(+). The enzyme catalyses glycyl-tRNA(Ala) + H2O = tRNA(Ala) + glycine + H(+). D-aminoacyl-tRNA deacylase with broad substrate specificity. By recycling D-aminoacyl-tRNA to D-amino acids and free tRNA molecules, this enzyme counteracts the toxicity associated with the formation of D-aminoacyl-tRNA entities in vivo. The polypeptide is D-aminoacyl-tRNA deacylase (Haloarcula marismortui (strain ATCC 43049 / DSM 3752 / JCM 8966 / VKM B-1809) (Halobacterium marismortui)).